The following is a 120-amino-acid chain: MKILFVLISILYAVYCFSSEEDVDSAYLANELEPVEDINSEQYAALEPKEEQERSCADMGQDCKDDCDCCLNIATCNCRFGRYFCSCTFGDYQTCLRKKGKCKRNRPQSCPRSNLNRKKG.

An N-terminal signal peptide occupies residues 1 to 16 (MKILFVLISILYAVYC). Positions 17 to 54 (FSSEEDVDSAYLANELEPVEDINSEQYAALEPKEEQER) are excised as a propeptide. 4 disulfides stabilise this stretch: C56–C70, C63–C76, C69–C87, and C78–C85. In terms of domain architecture, Agouti spans 56 to 95 (CADMGQDCKDDCDCCLNIATCNCRFGRYFCSCTFGDYQTC).

The protein belongs to the neurotoxin 05 (agouti) family. Contains 6 disulfide bonds. In terms of tissue distribution, expressed by the venom gland.

Its subcellular location is the secreted. The sequence is that of U13-lycotoxin-Ls1d from Lycosa singoriensis (Wolf spider).